Reading from the N-terminus, the 440-residue chain is Ribosomal protein uS12 methylthiotransferase RimO (440 aa).

Positions leucine 8 to asparagine 125 constitute an MTTase N-terminal domain. Positions 17, 52, 87, 152, 156, and 159 each coordinate [4Fe-4S] cluster. One can recognise a Radical SAM core domain in the interval threonine 138 to lysine 368. Residues lysine 371–serine 439 form the TRAM domain.

The protein belongs to the methylthiotransferase family. RimO subfamily. Requires [4Fe-4S] cluster as cofactor.

It is found in the cytoplasm. It catalyses the reaction L-aspartate(89)-[ribosomal protein uS12]-hydrogen + (sulfur carrier)-SH + AH2 + 2 S-adenosyl-L-methionine = 3-methylsulfanyl-L-aspartate(89)-[ribosomal protein uS12]-hydrogen + (sulfur carrier)-H + 5'-deoxyadenosine + L-methionine + A + S-adenosyl-L-homocysteine + 2 H(+). Its function is as follows. Catalyzes the methylthiolation of an aspartic acid residue of ribosomal protein uS12. This is Ribosomal protein uS12 methylthiotransferase RimO from Lawsonia intracellularis (strain PHE/MN1-00).